A 431-amino-acid polypeptide reads, in one-letter code: Adenylosuccinate synthetase (431 aa).

GTP contacts are provided by residues 12-18 (GDEGKGK) and 40-42 (GHT). Asp-13 acts as the Proton acceptor in catalysis. Asp-13 and Gly-40 together coordinate Mg(2+). IMP-binding positions include 13 to 16 (DEGK), 38 to 41 (NAGH), Thr-130, Arg-144, Gln-225, Thr-240, and Arg-304. Residue His-41 is the Proton donor of the active site. A substrate-binding site is contributed by 300–306 (ATTGRPR). GTP is bound by residues Arg-306, 332–334 (KLD), and 414–416 (SVG).

It belongs to the adenylosuccinate synthetase family. In terms of assembly, homodimer. Requires Mg(2+) as cofactor.

Its subcellular location is the cytoplasm. It catalyses the reaction IMP + L-aspartate + GTP = N(6)-(1,2-dicarboxyethyl)-AMP + GDP + phosphate + 2 H(+). Its pathway is purine metabolism; AMP biosynthesis via de novo pathway; AMP from IMP: step 1/2. Functionally, plays an important role in the de novo pathway of purine nucleotide biosynthesis. Catalyzes the first committed step in the biosynthesis of AMP from IMP. In Anaeromyxobacter sp. (strain Fw109-5), this protein is Adenylosuccinate synthetase.